Reading from the N-terminus, the 815-residue chain is Kinesin heavy chain (815 aa).

The Kinesin motor domain occupies 11–329 (GVQVFCRIRP…LLFGARAKTI (319 aa)). Residue 88-95 (GQTSSGKT) coordinates ATP. Coiled-coil stretches lie at residues 335–374 (INEE…RWRA), 422–554 (PITD…LDEC), and 695–785 (PAQK…RMNA). Positions 788 to 815 (IVKPIRPGQVYTSPSAGMSQGAPNGSNA) are disordered. Polar residues predominate over residues 797 to 815 (VYTSPSAGMSQGAPNGSNA).

Belongs to the TRAFAC class myosin-kinesin ATPase superfamily. Kinesin family. Kinesin subfamily. In terms of assembly, oligomer composed of two heavy chains and two light chains.

The protein resides in the cytoplasm. The protein localises to the cytoskeleton. Its function is as follows. Microtubule-dependent motor protein required for organelle transport. Plays a role in endosome transport. Required for the transport of mitochondria along the axon of motor neurons. Involved in the nuclear migration of hyp7 hypodermal precursor cells. Required for the formation of dendritic branches of PVD sensory neurons. In non-ciliated neurons such as the PVD and PHC neurons, required for the organization of minus-end out microtubules in dendrites. Also required for the minus-end out orientation of microtubules in dendrites of AQR gas-sensing neurons. Involved in the localization of unc-33 to neurites. Positively regulates cilium position and dendrite morphogenesis in the postembryonic AQR and PQR gas-sensing neurons. Plays a more prominent role in regulating dendrite morphogenesis in AQR than in PQR neurons. Plays a role in regulating the localization of grdn-1 to the distal dendrites of AQR sensory neurons. The chain is Kinesin heavy chain from Caenorhabditis elegans.